The primary structure comprises 355 residues: Histidinol-phosphate aminotransferase 2 (355 aa).

Residue K210 is modified to N6-(pyridoxal phosphate)lysine.

Belongs to the class-II pyridoxal-phosphate-dependent aminotransferase family. Histidinol-phosphate aminotransferase subfamily. Homodimer. The cofactor is pyridoxal 5'-phosphate.

The catalysed reaction is L-histidinol phosphate + 2-oxoglutarate = 3-(imidazol-4-yl)-2-oxopropyl phosphate + L-glutamate. The protein operates within amino-acid biosynthesis; L-histidine biosynthesis; L-histidine from 5-phospho-alpha-D-ribose 1-diphosphate: step 7/9. The sequence is that of Histidinol-phosphate aminotransferase 2 from Gluconobacter oxydans (strain 621H) (Gluconobacter suboxydans).